We begin with the raw amino-acid sequence, 275 residues long: T-cell ecto-ADP-ribosyltransferase 2 (275 aa).

Positions 1 to 20 (MPSNICKFFLTWWLIQQVTG) are cleaved as a signal peptide. Disulfide bonds link cysteine 41–cysteine 243 and cysteine 141–cysteine 193. One can recognise a TR mART core domain in the interval 61 to 238 (AKLKVAWEEA…IFLDSPKRKK (178 aa)). Residues tyrosine 98, arginine 146, and glutamine 164 each contribute to the NAD(+) site. Arginine 146 is a catalytic residue. Residue serine 167 is part of the active site. Residue serine 202 coordinates NAD(+). Position 204 is an ADP-ribosylarginine; by autocatalysis (arginine 204). The active site involves glutamate 209. A lipid anchor (GPI-anchor amidated serine) is attached at serine 246. The propeptide at 247–275 (SAGARESCVSLFLVVLPSLLVQLLCLAEP) is removed in mature form.

It belongs to the Arg-specific ADP-ribosyltransferase family. Postthymic T-cells.

Its subcellular location is the cell membrane. It catalyses the reaction L-arginyl-[protein] + NAD(+) = N(omega)-(ADP-D-ribosyl)-L-arginyl-[protein] + nicotinamide + H(+). The enzyme catalyses NAD(+) + H2O = ADP-D-ribose + nicotinamide + H(+). Its function is as follows. Has both NAD(+) glycohydrolase and ADP-ribosyltransferase activity (to a lesser extent). In Rattus norvegicus (Rat), this protein is T-cell ecto-ADP-ribosyltransferase 2 (Art2b).